The primary structure comprises 827 residues: Cytosolic Fe-S cluster assembly factor NAR1 (827 aa).

Cys-22 serves as a coordination point for [4Fe-4S] cluster. Residues 57–77 (AYYESSTPPSSSLSAADSRPR) form a disordered region. The segment covering 61 to 73 (SSTPPSSSLSAAD) has biased composition (low complexity). The [4Fe-4S] cluster site is built by Cys-92, Cys-95, and Cys-98. The interval 209–231 (RENARKRAKLSNAPADDDDRLHP) is disordered. The [4Fe-4S] cluster site is built by Cys-246, Cys-307, Cys-591, and Cys-595. 2 disordered regions span residues 599-637 (GGQI…WAAD) and 709-739 (DQGG…NAKS). Polar residues-rich tracts occupy residues 604–621 (PPTQ…TVDN) and 713–738 (ANDS…SNAK).

The protein belongs to the NARF family.

Its function is as follows. Component of the cytosolic Fe/S protein assembly machinery. Required for maturation of extramitochondrial Fe/S proteins. May play a role in the transfer of pre-assembled Fe/S clusters to target apoproteins. The sequence is that of Cytosolic Fe-S cluster assembly factor NAR1 (NAR1) from Mycosarcoma maydis (Corn smut fungus).